A 408-amino-acid chain; its full sequence is Multidrug resistance protein MdtG (408 aa).

Transmembrane regions (helical) follow at residues 16 to 36 (LIVA…VMPF), 58 to 78 (IVFS…GGLA), 92 to 112 (LGMG…QFLI), 115 to 135 (ALLG…ATQV), 146 to 166 (TLST…GLLA), 173 to 193 (PVFF…LLCI), 224 to 244 (LFVT…ILTL), 253 to 273 (VGNI…AALL), 290 to 310 (ILIA…FVQT), 319 to 339 (FLLG…LVYN), and 378 to 398 (AVFL…WNSL).

This sequence belongs to the major facilitator superfamily. DHA1 family. MdtG (TC 2.A.1.2.20) subfamily.

The protein resides in the cell inner membrane. Confers resistance to fosfomycin and deoxycholate. The sequence is that of Multidrug resistance protein MdtG from Escherichia fergusonii (strain ATCC 35469 / DSM 13698 / CCUG 18766 / IAM 14443 / JCM 21226 / LMG 7866 / NBRC 102419 / NCTC 12128 / CDC 0568-73).